Reading from the N-terminus, the 1016-residue chain is Probably inactive leucine-rich repeat receptor-like protein kinase At3g28040 (1016 aa).

The signal sequence occupies residues 1 to 26 (MGKQRRTMISFTLFLTLTMMSSLING). Residues 27–646 (DTDSIQLNDD…FHRRMFLSVS (620 aa)) lie on the Extracellular side of the membrane. LRR repeat units lie at residues 102-124 (RLKVLSLSNNNFTGNINALSNNN), 125-147 (HLQKLDLSHNNLSGQIPSSLGSI), 149-171 (SLQHLDLTGNSFSGTLSDDLFNN), 174-196 (SLRYLSLSHNHLEGQIPSTLFRC), 198-219 (VLNSLNLSRNRFSGNPSFVSGI), 224-245 (RLRALDLSSNSLSGSIPLGILS), 248-270 (NLKELQLQRNQFSGALPSDIGLC), 272-295 (HLNRVDLSSNHFSGELPRTLQKLK), 296-318 (SLNHFDVSNNLLSGDFPPWIGDM), 320-342 (GLVHLDFSSNELTGKLPSSISNL), 344-366 (SLKDLNLSENKLSGEVPESLESC), 368-390 (ELMIVQLKGNDFSGNIPDGFFDL), 391-413 (GLQEMDFSGNGLTGSIPRGSSRL), 416-438 (SLIRLDLSHNSLTGSIPGEVGLF), 440-462 (HMRYLNLSWNHFNTRVPPEIEFL), 464-486 (NLTVLDLRNSALIGSVPADICES), 488-510 (SLQILQLDGNSLTGSIPEGIGNC), 512-535 (SLKLLSLSHNNLTGPIPKSLSNLQ), 536-559 (ELKILKLEANKLSGEIPKELGDLQ), and 560-582 (NLLLVNVSFNRLIGRLPLGDVFQ). N-linked (GlcNAc...) asparagine glycosylation is found at asparagine 112, asparagine 135, and asparagine 171. A glycan (N-linked (GlcNAc...) asparagine) is linked at asparagine 203. N-linked (GlcNAc...) asparagine glycosylation is present at asparagine 349. 4 N-linked (GlcNAc...) asparagine glycosylation sites follow: asparagine 445, asparagine 464, asparagine 509, and asparagine 522. Asparagine 565 carries N-linked (GlcNAc...) asparagine glycosylation. The helical transmembrane segment at 647–667 (VIVAISAAILIFSGVIIITLL) threads the bilayer. Residues 668–1016 (NASVRRRLAF…PVPHRIMDSF (349 aa)) lie on the Cytoplasmic side of the membrane. In terms of domain architecture, Protein kinase spans 726 to 1013 (LNKASRIGEG…INSPVPHRIM (288 aa)). Residues 732–740 (IGEGVFGTV) and lysine 755 contribute to the ATP site. Tyrosine 841 and tyrosine 898 each carry phosphotyrosine.

Belongs to the protein kinase superfamily. Ser/Thr protein kinase family.

It is found in the membrane. In Arabidopsis thaliana (Mouse-ear cress), this protein is Probably inactive leucine-rich repeat receptor-like protein kinase At3g28040.